The sequence spans 525 residues: Phospho-2-dehydro-3-deoxyheptonate aldolase 1, chloroplastic (525 aa).

A compositionally biased stretch (polar residues) spans 1 to 13; that stretch reads MALSNASSLSTRS. Positions 1-35 are disordered; sequence MALSNASSLSTRSIYGGDLSHRPSNRQSSFTFHPA. A chloroplast-targeting transit peptide spans 1–52; the sequence is MALSNASSLSTRSIYGGDLSHRPSNRQSSFTFHPAVNTKPKSVNLVTAVHAA.

It belongs to the class-II DAHP synthase family.

The protein localises to the plastid. It localises to the chloroplast. The catalysed reaction is D-erythrose 4-phosphate + phosphoenolpyruvate + H2O = 7-phospho-2-dehydro-3-deoxy-D-arabino-heptonate + phosphate. It functions in the pathway metabolic intermediate biosynthesis; chorismate biosynthesis; chorismate from D-erythrose 4-phosphate and phosphoenolpyruvate: step 1/7. In Arabidopsis thaliana (Mouse-ear cress), this protein is Phospho-2-dehydro-3-deoxyheptonate aldolase 1, chloroplastic (DHS1).